The sequence spans 204 residues: Protein GrpE (204 aa).

Basic and acidic residues predominate over residues 1–12 (MSNEEQAQKDDA). Positions 1 to 32 (MSNEEQAQKDDAQPVNEAAIDATAEQADAEVE) are disordered. Low complexity predominate over residues 17-26 (EAAIDATAEQ).

Belongs to the GrpE family. Homodimer.

The protein resides in the cytoplasm. Functionally, participates actively in the response to hyperosmotic and heat shock by preventing the aggregation of stress-denatured proteins, in association with DnaK and GrpE. It is the nucleotide exchange factor for DnaK and may function as a thermosensor. Unfolded proteins bind initially to DnaJ; upon interaction with the DnaJ-bound protein, DnaK hydrolyzes its bound ATP, resulting in the formation of a stable complex. GrpE releases ADP from DnaK; ATP binding to DnaK triggers the release of the substrate protein, thus completing the reaction cycle. Several rounds of ATP-dependent interactions between DnaJ, DnaK and GrpE are required for fully efficient folding. This chain is Protein GrpE, found in Pseudoalteromonas atlantica (strain T6c / ATCC BAA-1087).